The chain runs to 180 residues: MQQKLENIKFVITDVDGVLTDGQLHYDANGEAIKSFHVRDGLGIKMLMDADIQVAVLSGRDSPILRRRIADLGIKLFFLGKLEKETACFDLMKQAGVTAEQTAYIGDDSVDLPAFAACGTSFAVADAPIYVKNAVDHVLSTHGGKGAFREMSDMILQAQGKSSVFDTAQGFLKSVKSMGQ.

Mg(2+)-binding residues include aspartate 14 and aspartate 16. Residues aspartate 16, 37–41 (HVRDG), lysine 45, arginine 60, arginine 68, and lysine 84 contribute to the substrate site. Aspartate 107 lines the Mg(2+) pocket.

This sequence belongs to the KdsC family. As to quaternary structure, homotetramer. Mg(2+) is required as a cofactor.

It carries out the reaction 3-deoxy-alpha-D-manno-2-octulosonate-8-phosphate + H2O = 3-deoxy-alpha-D-manno-oct-2-ulosonate + phosphate. Its function is as follows. Catalyzes the hydrolysis of 3-deoxy-D-manno-octulosonate 8-phosphate (KDO 8-P) to 3-deoxy-D-manno-octulosonate (KDO) and inorganic phosphate. The protein is 3-deoxy-D-manno-octulosonate 8-phosphate phosphatase KdsC of Haemophilus influenzae (strain ATCC 51907 / DSM 11121 / KW20 / Rd).